The primary structure comprises 107 residues: Thioredoxin (107 aa).

The region spanning 2-107 (SATPQVSDAS…TLASTLEKYL (106 aa)) is the Thioredoxin domain. A disulfide bridge links cysteine 32 with cysteine 35.

This sequence belongs to the thioredoxin family.

Component of the thioredoxin-thioredoxin reductase system. Participates in various redox reactions through the reversible oxidation of its active center dithiol to a disulfide and catalyzes dithiol-disulfide exchange reactions. The sequence is that of Thioredoxin (trxA) from Synechocystis sp. (strain ATCC 27184 / PCC 6803 / Kazusa).